Here is a 408-residue protein sequence, read N- to C-terminus: Serine/threonine transporter SstT (408 aa).

9 helical membrane-spanning segments follow: residues 11 to 31 (LANG…VSLA), 43 to 63 (FLGS…VFIL), 82 to 102 (IVVL…LLSM), 141 to 161 (ALMT…GLAL), 192 to 212 (IGIF…AIAG), 216 to 236 (LLAV…PLIV), 290 to 310 (IPLG…VLTL), 316 to 336 (LGIQ…AISA), and 363 to 383 (VAMQ…AAET).

It belongs to the dicarboxylate/amino acid:cation symporter (DAACS) (TC 2.A.23) family.

It localises to the cell inner membrane. The catalysed reaction is L-serine(in) + Na(+)(in) = L-serine(out) + Na(+)(out). The enzyme catalyses L-threonine(in) + Na(+)(in) = L-threonine(out) + Na(+)(out). Its function is as follows. Involved in the import of serine and threonine into the cell, with the concomitant import of sodium (symport system). This Shewanella sp. (strain MR-4) protein is Serine/threonine transporter SstT.